The chain runs to 233 residues: 5'-methylthioadenosine/S-adenosylhomocysteine nucleosidase (233 aa).

The active-site Proton acceptor is glutamate 12. Substrate is bound by residues glycine 78, isoleucine 152, and 173–174 (ME). Aspartate 197 (proton donor) is an active-site residue.

The protein belongs to the PNP/UDP phosphorylase family. MtnN subfamily. As to quaternary structure, homodimer.

It carries out the reaction S-adenosyl-L-homocysteine + H2O = S-(5-deoxy-D-ribos-5-yl)-L-homocysteine + adenine. The catalysed reaction is S-methyl-5'-thioadenosine + H2O = 5-(methylsulfanyl)-D-ribose + adenine. It catalyses the reaction 5'-deoxyadenosine + H2O = 5-deoxy-D-ribose + adenine. It functions in the pathway amino-acid biosynthesis; L-methionine biosynthesis via salvage pathway; S-methyl-5-thio-alpha-D-ribose 1-phosphate from S-methyl-5'-thioadenosine (hydrolase route): step 1/2. Functionally, catalyzes the irreversible cleavage of the glycosidic bond in both 5'-methylthioadenosine (MTA) and S-adenosylhomocysteine (SAH/AdoHcy) to adenine and the corresponding thioribose, 5'-methylthioribose and S-ribosylhomocysteine, respectively. Also cleaves 5'-deoxyadenosine, a toxic by-product of radical S-adenosylmethionine (SAM) enzymes, into 5-deoxyribose and adenine. Thus, is required for in vivo function of the radical SAM enzymes biotin synthase and lipoic acid synthase, that are inhibited by 5'-deoxyadenosine accumulation. The chain is 5'-methylthioadenosine/S-adenosylhomocysteine nucleosidase from Yersinia enterocolitica serotype O:8 / biotype 1B (strain NCTC 13174 / 8081).